Consider the following 350-residue polypeptide: Protein disulfide isomerase Creld2 (350 aa).

The signal sequence occupies residues 1–22; that stretch reads MHLLLAAAFGLLLLLPPPGAVA. The CXXC motif lies at 29-32; that stretch reads CQRC. 4 cysteine pairs are disulfide-bonded: C29–C32, C138–C152, C146–C164, and C166–C175. The EGF-like 1 domain occupies 134–176; the sequence is DCQECQGGSERPCSGNGYCSGDGSRQGDGSCQCHTGYKGPLCI. The stretch at 191–238 is one FU 1 repeat; it reads HSICSACDESCKTCSGPSNKDCIQCEVGWARVEDACVDVDECAAETSP. A glycan (N-linked (GlcNAc...) asparagine) is linked at N249. The FU 2 repeat unit spans residues 251-298; sequence SYTCEDCDSTCVGCTGKGPANCKECIAGYTKESGQCTDIDECSLEEKA. Positions 261–264 match the CXXC motif; sequence CVGC. 4 cysteine pairs are disulfide-bonded: C261/C264, C292/C306, C299/C315, and C317/C328. The region spanning 288-329 is the EGF-like 2; calcium-binding domain; it reads DIDECSLEEKACKRKNENCYNVPGSFVCVCPEGFEETEDACV.

The protein belongs to the CRELD family. As to quaternary structure, interacts with CHRNA4. Component of a complex containing at least CRELD2, MANF, MATN3 and PDIA4. Expressed in chondrocytes (at protein level).

It is found in the endoplasmic reticulum. The enzyme catalyses Catalyzes the rearrangement of -S-S- bonds in proteins.. Its function is as follows. Protein disulfide isomerase. Might play a role in the unfolded protein response. May regulate transport of alpha4-beta2 neuronal acetylcholine receptor. In Mus musculus (Mouse), this protein is Protein disulfide isomerase Creld2 (Creld2).